A 395-amino-acid polypeptide reads, in one-letter code: MKILVLNSGSSSIKFKFFDNKVVKASGLVEKIGEQNSKVILKNVLNNESFERELMINNHEEGLSIVNELFKESGILADLNALDGCGHRIVHGGRNLSEHCLVDDYVLKEIDRVSIFAPLHNPAHLAGIKTMIKAAPSVANVAIFDTAFHRTMPDFAYMYALPYDFYDKHNIRRYGFHGTSHAFVSSRAASLLEKDKSELNVISAHLGNGASVCAIEKGKSVDTSMGFTPLEGLVMGTRCGDLDPAILPFISHLKGLTIEEIDTLMNKKSGVYGICGYNDFRDIEREIEQGNDKARLALDMFCYRLVKYIGSYFAVLPKTDAIIFTGGIGENDSLVRQKVCERLAHLGIELDFELNKQRISGERMINHANSKVKVLVIPTDEELEIARITEELISN.

Residue asparagine 7 coordinates Mg(2+). Lysine 14 is an ATP binding site. Residue arginine 88 coordinates substrate. The active-site Proton donor/acceptor is the aspartate 145. ATP is bound by residues 205-209 (HLGNG), 279-281 (DFR), and 327-331 (GIGEN). A Mg(2+)-binding site is contributed by glutamate 381.

Belongs to the acetokinase family. As to quaternary structure, homodimer. Mg(2+) is required as a cofactor. Requires Mn(2+) as cofactor.

It is found in the cytoplasm. It carries out the reaction acetate + ATP = acetyl phosphate + ADP. It participates in metabolic intermediate biosynthesis; acetyl-CoA biosynthesis; acetyl-CoA from acetate: step 1/2. Functionally, catalyzes the formation of acetyl phosphate from acetate and ATP. Can also catalyze the reverse reaction. This Campylobacter jejuni subsp. jejuni serotype O:6 (strain 81116 / NCTC 11828) protein is Acetate kinase.